A 695-amino-acid chain; its full sequence is Segment polarity protein dishevelled homolog DVL-1 (695 aa).

The DIX domain maps to 1 to 85 (MAETKIIYHM…RVVSWLVLAE (85 aa)). Positions 89 to 236 (SDAGSQGTDS…RLRQTDRASS (148 aa)) are disordered. Positions 142–151 (SHRRERARRR) are enriched in basic residues. The segment covering 152 to 171 (NRDEAARTNGHPRGDRRREL) has biased composition (basic and acidic residues). Residues 177–192 (SASTVLSSELESSSFI) show a composition bias toward low complexity. Serine 194 carries the phosphoserine modification. Low complexity predominate over residues 201–214 (SRLSSSTEQSTSSR). A compositionally biased stretch (basic residues) spans 215–228 (LIRKHKCRRRKQRL). One can recognise a PDZ domain in the interval 251 to 323 (TVTLNMERHH…NDDAVRVLRE (73 aa)). The DEP domain maps to 425 to 499 (PDSGLEIRDR…SEQCYYVFGD (75 aa)). Low complexity predominate over residues 551–580 (PAYQDPGFSYGSGSAGSQQSEGSKSSGSTR). The disordered stretch occupies residues 551–641 (PAYQDPGFSY…SQASAVAPGL (91 aa)). A compositionally biased stretch (polar residues) spans 622–635 (SQLSRGSSPRSQAS).

It belongs to the DSH family. As to quaternary structure, interacts with BRD7 and INVS. Interacts (via PDZ domain) with the VANGL1 and VANGL2 (via C-terminus). Interacts (via PDZ domain) with NXN. Interacts with CXXC4. Interacts with ARRB1; the interaction is enhanced by phosphorylation of DVL1. Interacts with CYLD. Interacts (via PDZ domain) with RYK. Self-associates (via DIX domain) and forms higher homooligomers. Interacts (via PDZ domain) with DACT1 and FZD7, where DACT1 and FZD7 compete for the same binding site. Interacts (via DEP domain) with MUSK; the interaction is direct and mediates the formation a DVL1, MUSK and PAK1 ternary complex involved in AChR clustering. Interacts (via PDZ domain) with TMEM88. Interacts with DCDC2. Interacts with FOXK2. Interacts with PKD1 (via extracellular domain). Interacts (via PDZ domain) with CCDC88C/DAPLE; competes with CCDC88C for binding to frizzled receptor FZD7 and dissociates from CCDC88C following initiation of non-canonical Wnt signaling when CCDC88C displaces DVL1 from ligand-activated FZD7. Ubiquitinated; undergoes both 'Lys-48'-linked ubiquitination, leading to its subsequent degradation by the ubiquitin-proteasome pathway, and 'Lys-63'-linked ubiquitination. The interaction with INVS is required for ubiquitination. Deubiquitinated by CYLD, which acts on 'Lys-63'-linked ubiquitin chains.

The protein resides in the cell membrane. It localises to the cytoplasm. It is found in the cytosol. Its subcellular location is the cytoplasmic vesicle. Its function is as follows. Participates in Wnt signaling by binding to the cytoplasmic C-terminus of frizzled family members and transducing the Wnt signal to down-stream effectors. Plays a role both in canonical and non-canonical Wnt signaling. Plays a role in the signal transduction pathways mediated by multiple Wnt genes. Required for LEF1 activation upon WNT1 and WNT3A signaling. DVL1 and PAK1 form a ternary complex with MUSK which is important for MUSK-dependent regulation of AChR clustering during the formation of the neuromuscular junction (NMJ). This chain is Segment polarity protein dishevelled homolog DVL-1 (Dvl1), found in Rattus norvegicus (Rat).